Consider the following 210-residue polypeptide: Protein GrpE (210 aa).

Residues 1 to 71 (MSEKDQSVNN…DTKIKELEKL (71 aa)) are disordered. Residues 11–23 (TEEDFNVETEDNQ) show a composition bias toward acidic residues. Over residues 24–35 (NDTNIENSVSNT) the composition is skewed to polar residues. Low complexity predominate over residues 36-46 (DNSEANASDSE). Acidic residues predominate over residues 47 to 60 (NNSEESIKDEESES). Over residues 61-71 (QDTKIKELEKL) the composition is skewed to basic and acidic residues.

It belongs to the GrpE family. In terms of assembly, homodimer.

Its subcellular location is the cytoplasm. In terms of biological role, participates actively in the response to hyperosmotic and heat shock by preventing the aggregation of stress-denatured proteins, in association with DnaK and GrpE. It is the nucleotide exchange factor for DnaK and may function as a thermosensor. Unfolded proteins bind initially to DnaJ; upon interaction with the DnaJ-bound protein, DnaK hydrolyzes its bound ATP, resulting in the formation of a stable complex. GrpE releases ADP from DnaK; ATP binding to DnaK triggers the release of the substrate protein, thus completing the reaction cycle. Several rounds of ATP-dependent interactions between DnaJ, DnaK and GrpE are required for fully efficient folding. The protein is Protein GrpE of Staphylococcus epidermidis (strain ATCC 35984 / DSM 28319 / BCRC 17069 / CCUG 31568 / BM 3577 / RP62A).